Here is a 491-residue protein sequence, read N- to C-terminus: Ribosome biogenesis protein YTM1 (491 aa).

The interval 8-103 is ubiquitin-like (UBL) domain; the sequence is IKIKFTTNES…EAFLTIEYTR (96 aa). The interval 113-491 is sufficient for interaction with ERB1 and association with 66S pre-ribosomes; sequence SFQNDDWISS…QINKGSDISK (379 aa). WD repeat units lie at residues 128–167, 169–207, 241–280, 318–358, 360–399, 409–449, and 456–491; these read RNLSAVTSSQLTITNPKILSGSYDGIVKTYNMSGKVEKQY, GHSAAVKSVKWISPTRIVSCGNDQQVRLWKTAYEGVVDQ, GHKAPVVDLAVNQQTKRILSAGYDLNVGFWSTNYKDMAKI, GHTE…CVDT, TTGFSLLSILQLPQVNLIATGSSARHINLHDPRVSASNTN, GHTN…SLYT, and STKSKIFGVCWDSEIGLISGGEDKRVQINKGSDISK. The tract at residues 205 to 228 is disordered; that stretch reads VDQNEEDEEENEANEGDDGDNDME. Over residues 207–225 the composition is skewed to acidic residues; it reads QNEEDEEENEANEGDDGDN.

The protein belongs to the WD repeat WDR12/YTM1 family. As to quaternary structure, component of the NOP7 complex, composed of ERB1, NOP7 and YTM1. The complex is held together by ERB1, which interacts with NOP7 via its N-terminal domain and with YTM1 via a high-affinity interaction between the seven-bladed beta-propeller domains of the 2 proteins. The NOP7 complex associates with the 66S pre-ribosome. Interacts (via UBL domain) with MDN1 (via VWFA/MIDAS domain).

It localises to the nucleus. Its subcellular location is the nucleolus. The protein resides in the nucleoplasm. In terms of biological role, component of the NOP7 complex, which is required for maturation of the 25S and 5.8S ribosomal RNAs and formation of the 60S ribosome. The sequence is that of Ribosome biogenesis protein YTM1 from Lodderomyces elongisporus (strain ATCC 11503 / CBS 2605 / JCM 1781 / NBRC 1676 / NRRL YB-4239) (Yeast).